The sequence spans 353 residues: MTAILERRESTSLWGRFCNWITSTENRLYIGWFGVLMIPTLLTATSVFIIAFIAAPPVDIDGIREPVSGSLLYGNNIISGAIIPTSAAIGLHFYPIWEAASVDEWLYNGGPYELIVLHFLLGVACYMGREWELSFRLGMRPWIAVAYSAPVAAATAVFLIYPIGQGSFSDGMPLGISGTFNFMIVFQAEHNILMHPFHMLGVAGVFGGSLFSAMHGSLVTSSLIRETTENESANEGYKFGQEEETYNIVAAHGYFGRLIFQYASFNNSRSLHFFLAAWPVVGIWFTALGISTMAFNLNGFNFNQSVVDSQGRVINTWADIINRANLGMEVMHERNAHNFPLDLAALEVPYLNG.

T2 is modified (N-acetylthreonine). T2 carries the post-translational modification Phosphothreonine. The next 3 helical transmembrane spans lie at 29-46 (YIGW…TATS), 118-133 (HFLL…EWEL), and 142-156 (WIAV…AATA). H118 provides a ligand contact to chlorophyll a. Y126 is a pheophytin a binding site. [CaMn4O5] cluster-binding residues include D170 and E189. Residues 197–218 (FHMLGVAGVFGGSLFSAMHGSL) form a helical membrane-spanning segment. Residue H198 participates in chlorophyll a binding. A quinone-binding positions include H215 and 264–265 (SF). H215 is a Fe cation binding site. Fe cation is bound at residue H272. A helical membrane pass occupies residues 274–288 (FLAAWPVVGIWFTAL). The [CaMn4O5] cluster site is built by H332, E333, D342, and A344. A propeptide spanning residues 345–353 (ALEVPYLNG) is cleaved from the precursor.

It belongs to the reaction center PufL/M/PsbA/D family. In terms of assembly, PSII is composed of 1 copy each of membrane proteins PsbA, PsbB, PsbC, PsbD, PsbE, PsbF, PsbH, PsbI, PsbJ, PsbK, PsbL, PsbM, PsbT, PsbX, PsbY, PsbZ, Psb30/Ycf12, at least 3 peripheral proteins of the oxygen-evolving complex and a large number of cofactors. It forms dimeric complexes. Requires The D1/D2 heterodimer binds P680, chlorophylls that are the primary electron donor of PSII, and subsequent electron acceptors. It shares a non-heme iron and each subunit binds pheophytin, quinone, additional chlorophylls, carotenoids and lipids. D1 provides most of the ligands for the Mn4-Ca-O5 cluster of the oxygen-evolving complex (OEC). There is also a Cl(-1) ion associated with D1 and D2, which is required for oxygen evolution. The PSII complex binds additional chlorophylls, carotenoids and specific lipids. as cofactor. In terms of processing, phosphorylated in both bundle sheath and mesophyll cells, phosphorylation increases when cells are grown under high rather than low light regimes (70 vs 900 umol photons/m-2/s). Post-translationally, PSII is subject to light-induced damage, in particular to D1. Damaged protein is degraded by Deg1 and FtsH proteases and replaced. In maize mesophyll cells D1 degradation is less extensive in grana (stacked) vs stroma (unstacked) lamellae, in part due to exclusion of FtsH from the grana. D1 degradation is faster in bundle sheath cells. Tyr-161 forms a radical intermediate that is referred to as redox-active TyrZ, YZ or Y-Z. In terms of processing, C-terminally processed by CTPA; processing is essential to allow assembly of the oxygen-evolving complex and thus photosynthetic growth.

Its subcellular location is the plastid. It localises to the chloroplast thylakoid membrane. It carries out the reaction 2 a plastoquinone + 4 hnu + 2 H2O = 2 a plastoquinol + O2. In terms of biological role, photosystem II (PSII) is a light-driven water:plastoquinone oxidoreductase that uses light energy to abstract electrons from H(2)O, generating O(2) and a proton gradient subsequently used for ATP formation. It consists of a core antenna complex that captures photons, and an electron transfer chain that converts photonic excitation into a charge separation. The D1/D2 (PsbA/PsbD) reaction center heterodimer binds P680, the primary electron donor of PSII as well as several subsequent electron acceptors. This is Photosystem II protein D1 from Zea mays (Maize).